The following is a 332-amino-acid chain: MSLKDQLIHNVHKEEHSHAHNKISVVGVGAVGMACAISILMKDLADELALVDVVEDKLKGEMLDLQHGSLFLRTPKIVSGKDYSVTAHSKLVIVTAGARQQEGESRLNLVQRNVNIFKVIIPNVVKYSPDCKLLIVSNPVDILTYVAWKISGFPKHRVIGSGCNLDSARFRHLMGERLGIHPLSCHGWIVGEHGDSSVPVWSGVNVAGVSLKALHPDMGTDADKEHWKEVHKQVVDSAYEVIKLKGYTSWAIGLSVADLAETIMKNLRRVHPISTVVKGMHGIKEDVFLSVPCVLGSSGITDVVKMILKPEEEDKLRKSADTLWGIQKELQF.

Residues 29–57 (GAVGMACAISILMKDLADELALVDVVEDK) and R99 contribute to the NAD(+) site. Residues R106, N138, and R169 each contribute to the substrate site. N138 provides a ligand contact to NAD(+). H193 (proton acceptor) is an active-site residue. T248 contributes to the substrate binding site.

This sequence belongs to the LDH/MDH superfamily. LDH family. Homotetramer.

It localises to the cytoplasm. It carries out the reaction (S)-lactate + NAD(+) = pyruvate + NADH + H(+). Its pathway is fermentation; pyruvate fermentation to lactate; (S)-lactate from pyruvate: step 1/1. Functionally, interconverts simultaneously and stereospecifically pyruvate and lactate with concomitant interconversion of NADH and NAD(+). This chain is L-lactate dehydrogenase A chain (LDHA), found in Columba livia (Rock dove).